A 494-amino-acid polypeptide reads, in one-letter code: NADH-quinone oxidoreductase subunit N (494 aa).

Helical transmembrane passes span 9-29 (VIPE…DLFL), 36-56 (LTYV…LSDF), 73-93 (PMSN…LVYS), 107-127 (LGGE…VMMS), 131-151 (FLII…LVAF), 166-186 (FVLG…LYGA), 209-229 (LIFG…AVPF), 241-261 (PTAV…AITI), 278-298 (MLTI…IMQT), 304-324 (LAYS…SGVV), 339-359 (MFYV…IMLL), 382-402 (FAFV…VVGF), 416-436 (GQIW…FYYL), and 469-489 (ALLA…AAII).

Belongs to the complex I subunit 2 family. As to quaternary structure, NDH-1 is composed of 14 different subunits. Subunits NuoA, H, J, K, L, M, N constitute the membrane sector of the complex.

It localises to the cell inner membrane. The catalysed reaction is a quinone + NADH + 5 H(+)(in) = a quinol + NAD(+) + 4 H(+)(out). Its function is as follows. NDH-1 shuttles electrons from NADH, via FMN and iron-sulfur (Fe-S) centers, to quinones in the respiratory chain. The immediate electron acceptor for the enzyme in this species is believed to be ubiquinone. Couples the redox reaction to proton translocation (for every two electrons transferred, four hydrogen ions are translocated across the cytoplasmic membrane), and thus conserves the redox energy in a proton gradient. This chain is NADH-quinone oxidoreductase subunit N, found in Herminiimonas arsenicoxydans.